The primary structure comprises 158 residues: Crossover junction endodeoxyribonuclease RuvC (158 aa).

Active-site residues include aspartate 7, glutamate 66, and aspartate 139. The Mg(2+) site is built by aspartate 7, glutamate 66, and aspartate 139.

The protein belongs to the RuvC family. In terms of assembly, homodimer which binds Holliday junction (HJ) DNA. The HJ becomes 2-fold symmetrical on binding to RuvC with unstacked arms; it has a different conformation from HJ DNA in complex with RuvA. In the full resolvosome a probable DNA-RuvA(4)-RuvB(12)-RuvC(2) complex forms which resolves the HJ. It depends on Mg(2+) as a cofactor.

Its subcellular location is the cytoplasm. It catalyses the reaction Endonucleolytic cleavage at a junction such as a reciprocal single-stranded crossover between two homologous DNA duplexes (Holliday junction).. Its function is as follows. The RuvA-RuvB-RuvC complex processes Holliday junction (HJ) DNA during genetic recombination and DNA repair. Endonuclease that resolves HJ intermediates. Cleaves cruciform DNA by making single-stranded nicks across the HJ at symmetrical positions within the homologous arms, yielding a 5'-phosphate and a 3'-hydroxyl group; requires a central core of homology in the junction. The consensus cleavage sequence is 5'-(A/T)TT(C/G)-3'. Cleavage occurs on the 3'-side of the TT dinucleotide at the point of strand exchange. HJ branch migration catalyzed by RuvA-RuvB allows RuvC to scan DNA until it finds its consensus sequence, where it cleaves and resolves the cruciform DNA. In Campylobacter hominis (strain ATCC BAA-381 / DSM 21671 / CCUG 45161 / LMG 19568 / NCTC 13146 / CH001A), this protein is Crossover junction endodeoxyribonuclease RuvC.